Here is a 325-residue protein sequence, read N- to C-terminus: MSFEQIKKVSVVIPIYNEEESLPLLLERTLAACKQLTQEYELILVDDGSSDKSAEILIQAAEQPENHIIAILLNRNYGQHSAIMAGFNQVNGDLIITLDADLQNPPEEIPRLVKTAEQGYDVVGTRRANRQDSLFRKTASKIINAMITKATGRSMGDYGCMLRAYRRHIVEAMLQCHERSTFIPILANTFARKTIEIDVAHAEREFGDSKYSFMKLINLMYDLLTCLTTAPLRLLSVVGSVIAVSGFLLAVLLMVLRLIFGAIWAAEGVFTLFALLFIFIGAQFVAMGLLGEYIGRIYNDVRARPRYFIQKVVGDNKTNDNQEEY.

A run of 2 helical transmembrane segments spans residues 235 to 255 (LSVVGSVIAVSGFLLAVLLMV) and 269 to 291 (VFTLFALLFIFIGAQFVAMGLLG).

The protein belongs to the glycosyltransferase 2 family.

It localises to the cell inner membrane. It catalyses the reaction UDP-4-deoxy-4-formamido-beta-L-arabinose + di-trans,octa-cis-undecaprenyl phosphate = 4-deoxy-4-formamido-alpha-L-arabinopyranosyl di-trans,octa-cis-undecaprenyl phosphate + UDP. The protein operates within glycolipid biosynthesis; 4-amino-4-deoxy-alpha-L-arabinose undecaprenyl phosphate biosynthesis; 4-amino-4-deoxy-alpha-L-arabinose undecaprenyl phosphate from UDP-4-deoxy-4-formamido-beta-L-arabinose and undecaprenyl phosphate: step 1/2. It functions in the pathway bacterial outer membrane biogenesis; lipopolysaccharide biosynthesis. Catalyzes the transfer of 4-deoxy-4-formamido-L-arabinose from UDP to undecaprenyl phosphate. The modified arabinose is attached to lipid A and is required for resistance to polymyxin and cationic antimicrobial peptides. Essential for virulence in insects. In Photorhabdus laumondii subsp. laumondii (strain DSM 15139 / CIP 105565 / TT01) (Photorhabdus luminescens subsp. laumondii), this protein is Undecaprenyl-phosphate 4-deoxy-4-formamido-L-arabinose transferase.